We begin with the raw amino-acid sequence, 496 residues long: Glutamyl-tRNA(Gln) amidotransferase subunit A (496 aa).

Catalysis depends on charge relay system residues lysine 75 and serine 150. Residue serine 174 is the Acyl-ester intermediate of the active site.

Belongs to the amidase family. GatA subfamily. Heterotrimer of A, B and C subunits.

It catalyses the reaction L-glutamyl-tRNA(Gln) + L-glutamine + ATP + H2O = L-glutaminyl-tRNA(Gln) + L-glutamate + ADP + phosphate + H(+). Functionally, allows the formation of correctly charged Gln-tRNA(Gln) through the transamidation of misacylated Glu-tRNA(Gln) in organisms which lack glutaminyl-tRNA synthetase. The reaction takes place in the presence of glutamine and ATP through an activated gamma-phospho-Glu-tRNA(Gln). This Burkholderia lata (strain ATCC 17760 / DSM 23089 / LMG 22485 / NCIMB 9086 / R18194 / 383) protein is Glutamyl-tRNA(Gln) amidotransferase subunit A.